Consider the following 345-residue polypeptide: MKEFDLESYDYHLPKELIANYPVLPKEKAKLLVYERRSQTITHTTFEHVLDFFPKNALVVLNDTKVIKARLFGSKHAFLPSKTTEVFFHRFFKGNTALTQIKGKIKVGDKIFFDANYYAEVLELLHNGQRLIAFYDNQTPLNQENILKLLEQYGHMPLPPYIKRADESLDAHEYQSVFAKHIGAVAAPTASLHFSQNALEKLLKDFKHAFLTLHVGAGTFLSVETKDIREHQIHTEVLHIPKKSQEILQESQEVLCIGTTALRSVEYFKRLKNPNQESFECDIFLHLANPIQHVNHLLTNFHLPKSSLLMLVSAMIGLEKTKEIYKIAIEKKYRFYSYGDGMLIL.

The protein belongs to the QueA family. In terms of assembly, monomer.

Its subcellular location is the cytoplasm. The catalysed reaction is 7-aminomethyl-7-carbaguanosine(34) in tRNA + S-adenosyl-L-methionine = epoxyqueuosine(34) in tRNA + adenine + L-methionine + 2 H(+). It functions in the pathway tRNA modification; tRNA-queuosine biosynthesis. Its function is as follows. Transfers and isomerizes the ribose moiety from AdoMet to the 7-aminomethyl group of 7-deazaguanine (preQ1-tRNA) to give epoxyqueuosine (oQ-tRNA). The polypeptide is S-adenosylmethionine:tRNA ribosyltransferase-isomerase (Helicobacter pylori (strain J99 / ATCC 700824) (Campylobacter pylori J99)).